The primary structure comprises 190 residues: Elongation factor P (190 aa).

Belongs to the elongation factor P family.

It is found in the cytoplasm. The protein operates within protein biosynthesis; polypeptide chain elongation. Its function is as follows. Involved in peptide bond synthesis. Stimulates efficient translation and peptide-bond synthesis on native or reconstituted 70S ribosomes in vitro. Probably functions indirectly by altering the affinity of the ribosome for aminoacyl-tRNA, thus increasing their reactivity as acceptors for peptidyl transferase. The polypeptide is Elongation factor P (Bartonella bacilliformis (strain ATCC 35685 / KC583 / Herrer 020/F12,63)).